The primary structure comprises 72 residues: Translation initiation factor IF-1 (72 aa).

Residues 1–72 (MSKNDVIEVE…TRGRIVYRFK (72 aa)) form the S1-like domain.

It belongs to the IF-1 family. Component of the 30S ribosomal translation pre-initiation complex which assembles on the 30S ribosome in the order IF-2 and IF-3, IF-1 and N-formylmethionyl-tRNA(fMet); mRNA recruitment can occur at any time during PIC assembly.

The protein resides in the cytoplasm. Its function is as follows. One of the essential components for the initiation of protein synthesis. Stabilizes the binding of IF-2 and IF-3 on the 30S subunit to which N-formylmethionyl-tRNA(fMet) subsequently binds. Helps modulate mRNA selection, yielding the 30S pre-initiation complex (PIC). Upon addition of the 50S ribosomal subunit IF-1, IF-2 and IF-3 are released leaving the mature 70S translation initiation complex. The polypeptide is Translation initiation factor IF-1 (Desulforamulus reducens (strain ATCC BAA-1160 / DSM 100696 / MI-1) (Desulfotomaculum reducens)).